Here is a 389-residue protein sequence, read N- to C-terminus: MNLHEYQAKQLFEHYGLPVKNGAVCQSVEDVDLVLAQLSGDKWAAKCQVHAGGRGKAGGVKLVQDVEEARAFAEKWLGQRLVTFQTDKLGQPVNQIYFEETCDIDKEFYLSAVVDRASQKVMFIASPAGGMNIEEVAQNSLHLLHKVEIDPLFGGLPYQGRELAFKLGLSGTQNKQFTDIFMGLSRLFLEKDLSLVEVNPLVLTKQGYLVCLDAKISVDDNALFRHKDLLALQDLTQNDAREAEAEKFQLNYVALEGDIGCMVNGAGLAMGTMDIVKLYGGKPANFLDVGGGATKERVAEAFKIILTDPSVKVILVNIFGGIVRCDLIAEGVIAAVNEVGVRVPVVVRLEGTNAEMGRQILAQSDVNILTAQSLQQAAELAVNAAKGEH.

ATP-binding positions include Lys-46, 53–55, Glu-99, Cys-102, and Glu-107; that span reads GRG. The Mg(2+) site is built by Asn-199 and Asp-213. Substrate-binding positions include Asn-264 and 321-323; that span reads GIV.

This sequence belongs to the succinate/malate CoA ligase beta subunit family. In terms of assembly, heterotetramer of two alpha and two beta subunits. Requires Mg(2+) as cofactor.

The enzyme catalyses succinate + ATP + CoA = succinyl-CoA + ADP + phosphate. It catalyses the reaction GTP + succinate + CoA = succinyl-CoA + GDP + phosphate. Its pathway is carbohydrate metabolism; tricarboxylic acid cycle; succinate from succinyl-CoA (ligase route): step 1/1. Functionally, succinyl-CoA synthetase functions in the citric acid cycle (TCA), coupling the hydrolysis of succinyl-CoA to the synthesis of either ATP or GTP and thus represents the only step of substrate-level phosphorylation in the TCA. The beta subunit provides nucleotide specificity of the enzyme and binds the substrate succinate, while the binding sites for coenzyme A and phosphate are found in the alpha subunit. The sequence is that of Succinate--CoA ligase [ADP-forming] subunit beta from Haemophilus influenzae (strain 86-028NP).